A 327-amino-acid polypeptide reads, in one-letter code: D-alanine--D-alanine ligase (327 aa).

The region spanning 113–312 (KRLWMTHGLA…YEDFVMQVLA (200 aa)) is the ATP-grasp domain. An ATP-binding site is contributed by 139–194 (VADLGLPLIVKPAREGSSIGLTKVIAADQMRAAFEKAAGLDADVIAETFIDGAELT). 3 residues coordinate Mg(2+): Asp-266, Glu-279, and Asn-281.

It belongs to the D-alanine--D-alanine ligase family. Requires Mg(2+) as cofactor. It depends on Mn(2+) as a cofactor.

It localises to the cytoplasm. It carries out the reaction 2 D-alanine + ATP = D-alanyl-D-alanine + ADP + phosphate + H(+). It functions in the pathway cell wall biogenesis; peptidoglycan biosynthesis. Functionally, cell wall formation. The sequence is that of D-alanine--D-alanine ligase from Cupriavidus metallidurans (strain ATCC 43123 / DSM 2839 / NBRC 102507 / CH34) (Ralstonia metallidurans).